We begin with the raw amino-acid sequence, 300 residues long: NAD kinase (300 aa).

Residue aspartate 75 is the Proton acceptor of the active site. Residues 75 to 76 (DG), 149 to 150 (ND), arginine 177, aspartate 179, 190 to 195 (TAYALS), alanine 214, and glutamine 248 each bind NAD(+).

Belongs to the NAD kinase family. Requires a divalent metal cation as cofactor.

It localises to the cytoplasm. The enzyme catalyses NAD(+) + ATP = ADP + NADP(+) + H(+). Involved in the regulation of the intracellular balance of NAD and NADP, and is a key enzyme in the biosynthesis of NADP. Catalyzes specifically the phosphorylation on 2'-hydroxyl of the adenosine moiety of NAD to yield NADP. This Burkholderia multivorans (strain ATCC 17616 / 249) protein is NAD kinase.